Reading from the N-terminus, the 307-residue chain is D-alanine--D-alanine ligase (307 aa).

In terms of domain architecture, ATP-grasp spans lysine 110–leucine 299. Proline 136–threonine 185 contacts ATP. The Mg(2+) site is built by aspartate 253, glutamate 266, and asparagine 268.

The protein belongs to the D-alanine--D-alanine ligase family. It depends on Mg(2+) as a cofactor. Requires Mn(2+) as cofactor.

Its subcellular location is the cytoplasm. It catalyses the reaction 2 D-alanine + ATP = D-alanyl-D-alanine + ADP + phosphate + H(+). Its pathway is cell wall biogenesis; peptidoglycan biosynthesis. Cell wall formation. This is D-alanine--D-alanine ligase from Alcanivorax borkumensis (strain ATCC 700651 / DSM 11573 / NCIMB 13689 / SK2).